Here is a 353-residue protein sequence, read N- to C-terminus: Phosphate acyltransferase (353 aa).

It belongs to the PlsX family. Homodimer. Probably interacts with PlsY.

Its subcellular location is the cytoplasm. The enzyme catalyses a fatty acyl-[ACP] + phosphate = an acyl phosphate + holo-[ACP]. Its pathway is lipid metabolism; phospholipid metabolism. Catalyzes the reversible formation of acyl-phosphate (acyl-PO(4)) from acyl-[acyl-carrier-protein] (acyl-ACP). This enzyme utilizes acyl-ACP as fatty acyl donor, but not acyl-CoA. The protein is Phosphate acyltransferase of Rhodopseudomonas palustris (strain HaA2).